Reading from the N-terminus, the 478-residue chain is Leukotoxin secretion protein D (478 aa).

Residues 1-59 lie on the Cytoplasmic side of the membrane; it reads MKIWLSGIYEFFLRYKNTWAEVWKIRKELDHPNRKKDESEFLPAHLDLIETPVSKKPRL. A helical transmembrane segment spans residues 60–80; the sequence is IAYLIMLFLVVAIVLASVSKV. Topologically, residues 81–478 are periplasmic; it reads EIVATAPGKL…ESVTESLRER (398 aa).

This sequence belongs to the membrane fusion protein (MFP) (TC 8.A.1) family.

It is found in the cell inner membrane. Its function is as follows. Involved in the transport of the Leukotoxin. The sequence is that of Leukotoxin secretion protein D (lktD) from Mannheimia haemolytica (Pasteurella haemolytica).